The sequence spans 469 residues: 3-isopropylmalate dehydratase large subunit (469 aa).

[4Fe-4S] cluster contacts are provided by C347, C410, and C413.

The protein belongs to the aconitase/IPM isomerase family. LeuC type 1 subfamily. As to quaternary structure, heterodimer of LeuC and LeuD. [4Fe-4S] cluster is required as a cofactor.

It catalyses the reaction (2R,3S)-3-isopropylmalate = (2S)-2-isopropylmalate. Its pathway is amino-acid biosynthesis; L-leucine biosynthesis; L-leucine from 3-methyl-2-oxobutanoate: step 2/4. Catalyzes the isomerization between 2-isopropylmalate and 3-isopropylmalate, via the formation of 2-isopropylmaleate. The sequence is that of 3-isopropylmalate dehydratase large subunit from Ralstonia nicotianae (strain ATCC BAA-1114 / GMI1000) (Ralstonia solanacearum).